The following is a 251-amino-acid chain: MRTGVIAKKMGMTRLFQEDGRHVPVTVLALENVQVVARREQDRDGYVAVQLGAGSAKPKNLTKPERGHFGKAEVEPKAFVAEFRVSEDGLLDVGAEISADHYVAGQFVDIQGSTQGKGFAGGMKRWGFGGLRATHGVSVSHRSLGSTGQRQDPGKVFKNKKMAGHMGDKNRTQQNLEIVQTDAERGLLFVKGSVPGSKGGWLLVKDSVKIAAPKDAPFPAGLKSAANSNSAPTETPAEEVAAPEATEGQEG.

An N5-methylglutamine modification is found at glutamine 151. Positions 214-251 (KDAPFPAGLKSAANSNSAPTETPAEEVAAPEATEGQEG) are disordered. Residues 231–251 (APTETPAEEVAAPEATEGQEG) show a composition bias toward low complexity.

The protein belongs to the universal ribosomal protein uL3 family. As to quaternary structure, part of the 50S ribosomal subunit. Forms a cluster with proteins L14 and L19. Post-translationally, methylated by PrmB.

One of the primary rRNA binding proteins, it binds directly near the 3'-end of the 23S rRNA, where it nucleates assembly of the 50S subunit. This chain is Large ribosomal subunit protein uL3, found in Rhizorhabdus wittichii (strain DSM 6014 / CCUG 31198 / JCM 15750 / NBRC 105917 / EY 4224 / RW1) (Sphingomonas wittichii).